The chain runs to 413 residues: BEN domain-containing protein 7 (413 aa).

Glycyl lysine isopeptide (Lys-Gly) (interchain with G-Cter in SUMO2) cross-links involve residues Lys-16, Lys-56, and Lys-85. A compositionally biased stretch (basic and acidic residues) spans 78 to 88; it reads GKEGEKLKEEP. Disordered regions lie at residues 78-153 and 208-243; these read GKEG…GELP and RTAV…MEKK. 2 stretches are compositionally biased toward polar residues: residues 99–111 and 121–153; these read LNSS…SLHP and PPQS…GELP. The span at 211 to 222 shows a compositional bias: basic residues; it reads VSRKRNKKKKVP. Over residues 223 to 232 the composition is skewed to low complexity; that stretch reads PKTVEPLTVK. Lys-243 participates in a covalent cross-link: Glycyl lysine isopeptide (Lys-Gly) (interchain with G-Cter in SUMO2). Residues 287-392 enclose the BEN domain; sequence GFDVFMPKSQ…IKLARRRLKR (106 aa). Thr-324 carries the phosphothreonine modification. Ser-328 is modified (phosphoserine).

The chain is BEN domain-containing protein 7 (BEND7) from Homo sapiens (Human).